Consider the following 548-residue polypeptide: Glucose-6-phosphate isomerase (548 aa).

Glu355 acts as the Proton donor in catalysis. Active-site residues include His386 and Lys514.

It belongs to the GPI family.

The protein localises to the cytoplasm. It catalyses the reaction alpha-D-glucose 6-phosphate = beta-D-fructose 6-phosphate. It functions in the pathway carbohydrate biosynthesis; gluconeogenesis. It participates in carbohydrate degradation; glycolysis; D-glyceraldehyde 3-phosphate and glycerone phosphate from D-glucose: step 2/4. Catalyzes the reversible isomerization of glucose-6-phosphate to fructose-6-phosphate. This Photorhabdus laumondii subsp. laumondii (strain DSM 15139 / CIP 105565 / TT01) (Photorhabdus luminescens subsp. laumondii) protein is Glucose-6-phosphate isomerase.